The primary structure comprises 1163 residues: Restriction of telomere capping protein 1 (1163 aa).

A disordered region spans residues 24–52; sequence GTPQSSNSPSANSSISSHKSSKRLSKNQL. Low complexity predominate over residues 28-41; the sequence is SSNSPSANSSISSH. WD repeat units follow at residues 129 to 169, 175 to 214, 221 to 265, 274 to 313, and 346 to 392; these read RNPN…KGTL, DHRRTVNSIDFIDSTDHIISGSQDGSIKLWDLRASPTKPV, LHND…GSNM, LHAGPVLSLHIHPEKEYVATGGRDHKICVFNYSEGRSLRT, and GMGS…IPKQ. 2 disordered regions span residues 525-606 and 833-881; these read AGSS…GSFG and DVHS…DSTT. Composition is skewed to polar residues over residues 539 to 556, 571 to 585, 593 to 606, and 868 to 880; these read LTRSYTHNPMSQFMTKSP, SPPSAGSALSTSTYT, NPSQTTQGSAGSFG, and VHSQSNPLAIDST. Residues 1114-1157 form an RING-type; degenerate zinc finger; the sequence is CVFCNEPCKGLVVAISLKCGHRGHFGCLKEWFIDEQNVECPGGC.

This sequence belongs to the WD repeat RTC1 family.

It localises to the vacuole. In terms of biological role, may be involved in a process influencing telomere capping. The protein is Restriction of telomere capping protein 1 (RTC1) of Lodderomyces elongisporus (strain ATCC 11503 / CBS 2605 / JCM 1781 / NBRC 1676 / NRRL YB-4239) (Yeast).